A 185-amino-acid polypeptide reads, in one-letter code: Ribonuclease M5 1 (185 aa).

In terms of domain architecture, Toprim spans Lys-4–Pro-87. Positions 10, 56, and 58 each coordinate Mg(2+).

This sequence belongs to the ribonuclease M5 family. Requires Mg(2+) as cofactor.

It is found in the cytoplasm. The catalysed reaction is Endonucleolytic cleavage of RNA, removing 21 and 42 nucleotides, respectively, from the 5'- and 3'-termini of a 5S-rRNA precursor.. In terms of biological role, required for correct processing of both the 5' and 3' ends of 5S rRNA precursor. Cleaves both sides of a double-stranded region yielding mature 5S rRNA in one step. The sequence is that of Ribonuclease M5 1 from Ligilactobacillus salivarius (strain UCC118) (Lactobacillus salivarius).